We begin with the raw amino-acid sequence, 352 residues long: Holliday junction branch migration complex subunit RuvB (352 aa).

The large ATPase domain (RuvB-L) stretch occupies residues 13 to 201; sequence IPRSRKELRL…FGLCHKIEFY (189 aa). ATP is bound by residues L37, R41, G82, K85, T86, T87, 148 to 150, R191, Y201, and R238; that span reads EDF. Residue T86 participates in Mg(2+) binding. Residues 202–273 form a small ATPAse domain (RuvB-S) region; sequence SNDELKQIIF…IIEKALDSQK (72 aa). The head domain (RuvB-H) stretch occupies residues 276–352; that stretch reads NRGLDNVDRK…KYISSNNEKY (77 aa). DNA contacts are provided by R330 and R335.

Belongs to the RuvB family. As to quaternary structure, homohexamer. Forms an RuvA(8)-RuvB(12)-Holliday junction (HJ) complex. HJ DNA is sandwiched between 2 RuvA tetramers; dsDNA enters through RuvA and exits via RuvB. An RuvB hexamer assembles on each DNA strand where it exits the tetramer. Each RuvB hexamer is contacted by two RuvA subunits (via domain III) on 2 adjacent RuvB subunits; this complex drives branch migration. In the full resolvosome a probable DNA-RuvA(4)-RuvB(12)-RuvC(2) complex forms which resolves the HJ.

The protein resides in the cytoplasm. The catalysed reaction is ATP + H2O = ADP + phosphate + H(+). Its function is as follows. The RuvA-RuvB-RuvC complex processes Holliday junction (HJ) DNA during genetic recombination and DNA repair, while the RuvA-RuvB complex plays an important role in the rescue of blocked DNA replication forks via replication fork reversal (RFR). RuvA specifically binds to HJ cruciform DNA, conferring on it an open structure. The RuvB hexamer acts as an ATP-dependent pump, pulling dsDNA into and through the RuvAB complex. RuvB forms 2 homohexamers on either side of HJ DNA bound by 1 or 2 RuvA tetramers; 4 subunits per hexamer contact DNA at a time. Coordinated motions by a converter formed by DNA-disengaged RuvB subunits stimulates ATP hydrolysis and nucleotide exchange. Immobilization of the converter enables RuvB to convert the ATP-contained energy into a lever motion, pulling 2 nucleotides of DNA out of the RuvA tetramer per ATP hydrolyzed, thus driving DNA branch migration. The RuvB motors rotate together with the DNA substrate, which together with the progressing nucleotide cycle form the mechanistic basis for DNA recombination by continuous HJ branch migration. Branch migration allows RuvC to scan DNA until it finds its consensus sequence, where it cleaves and resolves cruciform DNA. This chain is Holliday junction branch migration complex subunit RuvB, found in Prochlorococcus marinus (strain MIT 9515).